A 325-amino-acid polypeptide reads, in one-letter code: Transaldolase (325 aa).

The Schiff-base intermediate with substrate role is filled by Lys-125.

The protein belongs to the transaldolase family. Type 2 subfamily.

It localises to the cytoplasm. The enzyme catalyses D-sedoheptulose 7-phosphate + D-glyceraldehyde 3-phosphate = D-erythrose 4-phosphate + beta-D-fructose 6-phosphate. Its pathway is carbohydrate degradation; pentose phosphate pathway; D-glyceraldehyde 3-phosphate and beta-D-fructose 6-phosphate from D-ribose 5-phosphate and D-xylulose 5-phosphate (non-oxidative stage): step 2/3. Functionally, transaldolase is important for the balance of metabolites in the pentose-phosphate pathway. The polypeptide is Transaldolase (tal) (Campylobacter jejuni subsp. jejuni serotype O:2 (strain ATCC 700819 / NCTC 11168)).